A 471-amino-acid chain; its full sequence is Putative multidrug resistance protein MdtD (471 aa).

At 1–12 (MTDLPDSTRWQL) the chain is on the periplasmic side. Residues 13-33 (WIVAFGFFMQSLDTTIVNTAI) traverse the membrane as a helical segment. Topologically, residues 34–48 (PSMAQSLGESPLHMH) are cytoplasmic. The chain crosses the membrane as a helical span at residues 49-69 (MVIVSYVLTVAVMLPASGWLA). The Periplasmic portion of the chain corresponds to 70 to 76 (DKVGVRN). Residues 77-97 (IFFTAIVLFTLGSLFCALSGT) form a helical membrane-spanning segment. Residues 98–101 (LNEL) lie on the Cytoplasmic side of the membrane. The chain crosses the membrane as a helical span at residues 102–124 (LLARALQGVGGAMMVPVGRLTVM). The Periplasmic segment spans residues 125-137 (KIVPREQYMAAMT). A helical membrane pass occupies residues 138-158 (FVTLPGQVGPLLGPALGGLLV). Residues 159–164 (EYASWH) are Cytoplasmic-facing. Residues 165–185 (WIFLINIPVGIIGAIATLMLM) traverse the membrane as a helical segment. The Periplasmic portion of the chain corresponds to 186 to 196 (PNYTMQTRRFD). The helical transmembrane segment at 197–217 (LSGFLLLAVGMAVLTLALDGS) threads the bilayer. The Cytoplasmic portion of the chain corresponds to 218–224 (KGTGLSP). Residues 225 to 245 (LAIAGLVAVGVVALVLYLLHA) form a helical membrane-spanning segment. The Periplasmic segment spans residues 246-262 (RNNNRALFSLKLFRTRT). A helical transmembrane segment spans residues 263 to 283 (FSLGLAGSFAGRIGSGMLPFM). Residues 284–285 (TP) are Cytoplasmic-facing. The chain crosses the membrane as a helical span at residues 286-306 (VFLQIGLGFSPFHAGLMMIPM). The Periplasmic portion of the chain corresponds to 307–341 (VLGSMGMKRIVVQVVNRFGYRRVLVATTLGLSLVT). Residues 342-362 (LLFMTTALLGWYYVLPFVLFL) form a helical membrane-spanning segment. At 363–395 (QGMVNSTRFSSMNTLTLKDLPDNLASSGNSLLS) the chain is on the cytoplasmic side. Residues 396-416 (MIMQLSMSIGVTIAGLLLGLF) traverse the membrane as a helical segment. The Periplasmic portion of the chain corresponds to 417-430 (GSQHVSVDSGTTQT). Residues 431-451 (VFMYTWLSMAFIIALPAFIFA) form a helical membrane-spanning segment. The Cytoplasmic segment spans residues 452–471 (RVPNDTHQNVAISRRKRSAQ).

This sequence belongs to the major facilitator superfamily. TCR/Tet family.

The protein localises to the cell inner membrane. The polypeptide is Putative multidrug resistance protein MdtD (Shigella flexneri serotype 5b (strain 8401)).